A 488-amino-acid chain; its full sequence is MNLEETMPLVFERSIPGRIGFSLPESDVPETKASDYFEQAYIRSVPADLPELSELEIMRHYTNLSNHNFGVDSGFYPLGSCTMKYNPKINEKVARFPGFANIHPNQPESSVQGALELLYDLQTSLVEITGMDEVTLQPAAGAHGEWTGLMLIRAFHEKNGDTKRTKVIIPDSAHGTNPASAAVAGFDVVTVKSNEKGLVDVADLKKVVGEDTAALMLTNPNTLGLFEKDIVEMAEIVHEAGGKLYYDGANLNAIMAKVRPGDMGFDVVHLNLHKTFTGPHGGGGPGSGPIGVKKELIPFLPTPVLTKKEEGYTFDYNYPDSIGRVKPYYGNFGINVRAYTYIRTMGPDGLKLVTEYAVLNANYMMRKLQEAYDLPFDQVCKHEFVLSGNRQKKLGVRTVDIAKRLLDHNFHPPTVYFPLIVGEAIMIEPTETESKETLDSFIDTMLKIAKEAEENPEIVQEAPHSTYVKRLDETRAARKPILRYQKEV.

Lysine 274 is modified (N6-(pyridoxal phosphate)lysine).

It belongs to the GcvP family. C-terminal subunit subfamily. In terms of assembly, the glycine cleavage system is composed of four proteins: P, T, L and H. In this organism, the P 'protein' is a heterodimer of two subunits. The cofactor is pyridoxal 5'-phosphate.

It catalyses the reaction N(6)-[(R)-lipoyl]-L-lysyl-[glycine-cleavage complex H protein] + glycine + H(+) = N(6)-[(R)-S(8)-aminomethyldihydrolipoyl]-L-lysyl-[glycine-cleavage complex H protein] + CO2. Its function is as follows. The glycine cleavage system catalyzes the degradation of glycine. The P protein binds the alpha-amino group of glycine through its pyridoxal phosphate cofactor; CO(2) is released and the remaining methylamine moiety is then transferred to the lipoamide cofactor of the H protein. The chain is Probable glycine dehydrogenase (decarboxylating) subunit 2 from Listeria monocytogenes serotype 4b (strain F2365).